The sequence spans 203 residues: Urease accessory protein UreG (203 aa).

13-20 (GPVGSGKT) provides a ligand contact to GTP.

The protein belongs to the SIMIBI class G3E GTPase family. UreG subfamily. In terms of assembly, homodimer. UreD, UreF and UreG form a complex that acts as a GTP-hydrolysis-dependent molecular chaperone, activating the urease apoprotein by helping to assemble the nickel containing metallocenter of UreC. The UreE protein probably delivers the nickel.

The protein resides in the cytoplasm. Its function is as follows. Facilitates the functional incorporation of the urease nickel metallocenter. This process requires GTP hydrolysis, probably effectuated by UreG. The polypeptide is Urease accessory protein UreG (Psychromonas ingrahamii (strain DSM 17664 / CCUG 51855 / 37)).